A 465-amino-acid polypeptide reads, in one-letter code: Serine/threonine-protein kinase AtPK1/AtPK6 (465 aa).

Positions 91 to 96 (LVECLE) match the LVxCxE motif motif. One can recognise a Protein kinase domain in the interval 134-389 (FEVMKVVGKG…AEEIKQHKWF (256 aa)). Residues 140–148 (VGKGAFGKV) and lysine 163 each bind ATP. The Proton acceptor role is filled by aspartate 257. The segment at 275 to 301 (DFGLAKEFEENTRSNSMCGTTEYMAPE) is activation loop. The residue at position 290 (serine 290) is a Phosphoserine; by PDPK1. The 71-residue stretch at 390–460 (KGINWKKLEA…VRPPPSFLHQ (71 aa)) folds into the AGC-kinase C-terminal domain. Threonine 449 carries the post-translational modification Phosphothreonine; by TOR.

This sequence belongs to the protein kinase superfamily. AGC Ser/Thr protein kinase family. S6 kinase subfamily. Interacts with RAPTOR1. Interacts with RBR1-E2FB complex through its LVxCxE motif. Interacts with TAP46. Binds to MRF1. Post-translationally, undergoes serine-specific autophosphorylation. Phosphorylated at Thr-449 by TOR. In terms of tissue distribution, expressed in all tissues.

It localises to the cytoplasm. The protein resides in the nucleus. The catalysed reaction is L-seryl-[protein] + ATP = O-phospho-L-seryl-[protein] + ADP + H(+). It carries out the reaction L-threonyl-[protein] + ATP = O-phospho-L-threonyl-[protein] + ADP + H(+). Its activity is regulated as follows. Activated by PDK1. Repressed during osmotic stress. Downstream effector of TOR signaling pathway involved in osmotic stress response. Could be involved in the control of plant growth and development. Phosphorylates the ribosomal proteins P14, P16 and S6. Functions as a repressor of cell proliferation and required for maintenance of chromosome stability and ploidy levels through the RBR1-E2F pathway. Mediates the phosphorylation of MRFs (e.g. MRF1). The polypeptide is Serine/threonine-protein kinase AtPK1/AtPK6 (Arabidopsis thaliana (Mouse-ear cress)).